The following is a 292-amino-acid chain: NAD kinase (292 aa).

Aspartate 73 (proton acceptor) is an active-site residue. Residues 73–74, 147–148, histidine 158, arginine 175, aspartate 177, 188–193, and glutamine 247 each bind NAD(+); these read DG, NE, and TAYSLS.

This sequence belongs to the NAD kinase family. A divalent metal cation is required as a cofactor.

It is found in the cytoplasm. The enzyme catalyses NAD(+) + ATP = ADP + NADP(+) + H(+). Involved in the regulation of the intracellular balance of NAD and NADP, and is a key enzyme in the biosynthesis of NADP. Catalyzes specifically the phosphorylation on 2'-hydroxyl of the adenosine moiety of NAD to yield NADP. The protein is NAD kinase of Escherichia coli (strain UTI89 / UPEC).